The primary structure comprises 121 residues: Cytochrome c2 iso-2 (121 aa).

Cysteine 15, cysteine 18, histidine 19, and methionine 98 together coordinate heme c.

The protein belongs to the cytochrome c family. In terms of processing, binds 1 heme c group covalently per subunit.

In terms of biological role, cytochrome c2 is found mainly in purple, non-sulfur, photosynthetic bacteria where it functions as the electron donor to the oxidized bacteriochlorophyll in the photophosphorylation pathway. However, it may also have a role in the respiratory chain and is found in some non-photosynthetic bacteria. The sequence is that of Cytochrome c2 iso-2 from Rhodospirillum centenum (Rhodocista centenaria).